The sequence spans 230 residues: Ureidoacrylate amidohydrolase RutB (230 aa).

The active-site Proton acceptor is Asp24. Lys133 is a catalytic residue. Cys166 (nucleophile) is an active-site residue.

It belongs to the isochorismatase family. RutB subfamily.

The catalysed reaction is (Z)-3-ureidoacrylate + H2O + H(+) = (Z)-3-aminoacrylate + NH4(+) + CO2. It catalyses the reaction (Z)-3-ureidoacrylate + H2O = (Z)-3-aminoacrylate + carbamate + H(+). The enzyme catalyses (Z)-2-methylureidoacrylate + H2O + H(+) = (Z)-2-methylaminoacrylate + NH4(+) + CO2. Hydrolyzes ureidoacrylate to form aminoacrylate and carbamate. The carbamate hydrolyzes spontaneously, thereby releasing one of the nitrogen atoms of the pyrimidine ring as ammonia and one of its carbon atoms as CO2. This is Ureidoacrylate amidohydrolase RutB from Escherichia coli O150:H5 (strain SE15).